We begin with the raw amino-acid sequence, 392 residues long: Heat-inducible transcription repressor HrcA (392 aa).

Belongs to the HrcA family.

Negative regulator of class I heat shock genes (grpE-dnaK-dnaJ and groELS operons). Prevents heat-shock induction of these operons. The polypeptide is Heat-inducible transcription repressor HrcA (Chlamydia trachomatis serovar L2 (strain ATCC VR-902B / DSM 19102 / 434/Bu)).